We begin with the raw amino-acid sequence, 79 residues long: UPF0150 protein ssr1765 (79 aa).

It belongs to the UPF0150 family.

In Synechocystis sp. (strain ATCC 27184 / PCC 6803 / Kazusa), this protein is UPF0150 protein ssr1765.